A 988-amino-acid polypeptide reads, in one-letter code: UvrABC system protein A (988 aa).

Residue 33-40 coordinates ATP; sequence GLSGSGKS. The C4-type zinc-finger motif lies at 255 to 282; that stretch reads CPVCDYSLPELEPRLFSFNAPVGACPSC. 2 consecutive ABC transporter domains span residues 312–589 and 609–938; these read WDRR…PRSL and PNPK…QFLA. 642–649 contacts ATP; sequence GVSGSGKS. The C4-type zinc finger occupies 741–767; that stretch reads CEACQGDGMIKVEMHFLPDVYVPCDVC. The segment at 948–988 is disordered; that stretch reads ETRPAAMANKPDARPPRKVKPEKVAKATKTATKKTAKKKAS. Positions 958-972 are enriched in basic and acidic residues; that stretch reads PDARPPRKVKPEKVA. Residues 978-988 are compositionally biased toward basic residues; it reads ATKKTAKKKAS.

The protein belongs to the ABC transporter superfamily. UvrA family. Forms a heterotetramer with UvrB during the search for lesions.

It localises to the cytoplasm. The UvrABC repair system catalyzes the recognition and processing of DNA lesions. UvrA is an ATPase and a DNA-binding protein. A damage recognition complex composed of 2 UvrA and 2 UvrB subunits scans DNA for abnormalities. When the presence of a lesion has been verified by UvrB, the UvrA molecules dissociate. This Xanthomonas campestris pv. campestris (strain ATCC 33913 / DSM 3586 / NCPPB 528 / LMG 568 / P 25) protein is UvrABC system protein A.